The following is a 405-amino-acid chain: Splicing factor 45 (405 aa).

Residue Ser2 is modified to N-acetylserine. Residue Ser2 is modified to Phosphoserine. Lys15 participates in a covalent cross-link: Glycyl lysine isopeptide (Lys-Gly) (interchain with G-Cter in SUMO2). Lys21 carries the post-translational modification N6-acetyllysine. Residues Lys24 and Lys33 each participate in a glycyl lysine isopeptide (Lys-Gly) (interchain with G-Cter in SUMO2) cross-link. Lys41 carries the N6-acetyllysine; alternate modification. Lys41 is covalently cross-linked (Glycyl lysine isopeptide (Lys-Gly) (interchain with G-Cter in SUMO2); alternate). Residues 57–68 (LKRGGSSDDRQI) show a composition bias toward basic and acidic residues. 2 disordered regions span residues 57–88 (LKRG…SGFS) and 114–233 (RQRE…FLAN). Lys58 participates in a covalent cross-link: Glycyl lysine isopeptide (Lys-Gly) (interchain with G-Cter in SUMO2). A Phosphothreonine modification is found at Thr71. The span at 114–153 (RQREERQRQRELERQKEIEEREKRRKDRHEASGFSRRPDP) shows a compositional bias: basic and acidic residues. Phosphoserine is present on residues Ser155 and Ser169. Residues 182 to 200 (VEKDKELPRDFPYEEDSRP) show a composition bias toward basic and acidic residues. Phosphoserine is present on Ser222. Residues 235–283 (GGTVAHKIMQKYGFREGQGLGKHEQGLSTALSVEKTSKRGGKIIVGDAT) enclose the G-patch domain. Phosphothreonine is present on Thr237. Lys256 is covalently cross-linked (Glycyl lysine isopeptide (Lys-Gly) (interchain with G-Cter in SUMO2)). Ser266 is subject to Phosphoserine. A Glycyl lysine isopeptide (Lys-Gly) (interchain with G-Cter in SUMO2) cross-link involves residue Lys276. Phosphoserine occurs at positions 295 and 297. Positions 310–389 (VVLLRNMVGA…YFGGRVVKAC (80 aa)) constitute an RRM domain.

Binds SXL. Associates with the spliceosome. Interacts with SF3B1, SF1 and U2AF2.

It is found in the nucleus. In terms of biological role, splice factor that binds to the single-stranded 3'AG at the exon/intron border and promotes its utilization in the second catalytic step. Involved in the regulation of alternative splicing and the utilization of cryptic splice sites. The polypeptide is Splicing factor 45 (Rbm17) (Mus musculus (Mouse)).